Reading from the N-terminus, the 180-residue chain is Outer-membrane lipoprotein LolB (180 aa).

Positions 1–16 (MIRRVLLLSLALLLAG) are cleaved as a signal peptide. Residue Cys17 is the site of N-palmitoyl cysteine attachment. The S-diacylglycerol cysteine moiety is linked to residue Cys17.

This sequence belongs to the LolB family. In terms of assembly, monomer.

It is found in the cell outer membrane. Functionally, plays a critical role in the incorporation of lipoproteins in the outer membrane after they are released by the LolA protein. The protein is Outer-membrane lipoprotein LolB of Chromobacterium violaceum (strain ATCC 12472 / DSM 30191 / JCM 1249 / CCUG 213 / NBRC 12614 / NCIMB 9131 / NCTC 9757 / MK).